The sequence spans 575 residues: MNIQQLLSEKIRHAMIAAGAQQPAEPAVRQSGKPQFGDYQANGIMGAAKKLGLNPREFAQKVLDNLNLDGIAEKLEIAGPGFINIFLSKNWLVCHADEMLSAVNFGIKTAKPQTIVVDYSSPNVAKEMHVGHLRSTIIGDAVVRTLEFLGNHVIRANHVGDWGTQFGMLIAYLEKMENENASAMQLSDLEAFYRAAKEHYDNDEAFAEKARNYVVKLQSGDEYCRIMWKKLVDITMRHNQENYDRLNVTLTEKDVMGESLYNPMLPEIVADLKKQGLAVEDDGALVVYLDEFKNKDGDPMGVIVQKKDGGYLYTTTDIAAAKYRCHKLHADRVLVFSDSRQSQHMQQAWLITRKAGYVPDSFSLEHPFFGMMLGKDGKPFKTRTGGTVKLKDLLDEAVERADKLIAERNPDLTAEEKAAVVEAVAIGSVKYSDLSKNRTTDYVFDWDNMLTFEGNTAPYMQYAYTRIRSIFARAGIEPNSLNDDIVLTDDKERVLVIKLLQFEEALNGVAKDGMPHILCQYLYELAGMFSAFYEACPILNAERPIKNSRLKLAALAAKTLKQGLDLLGIKTVEKM.

A 'HIGH' region motif is present at residues 122–132; it reads PNVAKEMHVGH.

Belongs to the class-I aminoacyl-tRNA synthetase family. Monomer.

The protein localises to the cytoplasm. It catalyses the reaction tRNA(Arg) + L-arginine + ATP = L-arginyl-tRNA(Arg) + AMP + diphosphate. This chain is Arginine--tRNA ligase, found in Actinobacillus succinogenes (strain ATCC 55618 / DSM 22257 / CCUG 43843 / 130Z).